Here is a 133-residue protein sequence, read N- to C-terminus: MSRDFSREKRLLTPRHFKAVFDSPTGKVPGKNLLLLARNNDLDHPRLGLVIGKKSVKLSVERNRLKRLMRESFRQHQDSLVGWDIVIVARKGLGDVENPELIQHFGKLWKRLARSRPTPEEKSEPAGVDSTDA.

The disordered stretch occupies residues 114-133; the sequence is RSRPTPEEKSEPAGVDSTDA.

Belongs to the RnpA family. As to quaternary structure, consists of a catalytic RNA component (M1 or rnpB) and a protein subunit.

The enzyme catalyses Endonucleolytic cleavage of RNA, removing 5'-extranucleotides from tRNA precursor.. Functionally, RNaseP catalyzes the removal of the 5'-leader sequence from pre-tRNA to produce the mature 5'-terminus. It can also cleave other RNA substrates such as 4.5S RNA. The protein component plays an auxiliary but essential role in vivo by binding to the 5'-leader sequence and broadening the substrate specificity of the ribozyme. This chain is Ribonuclease P protein component, found in Pseudomonas syringae pv. tomato (strain ATCC BAA-871 / DC3000).